We begin with the raw amino-acid sequence, 236 residues long: tRNA (guanine-N(7)-)-methyltransferase (236 aa).

S-adenosyl-L-methionine-binding positions include Gly-54, 77 to 78 (EI), 110 to 111 (NA), and Leu-130. Residue Asp-133 is part of the active site. Residue 208–210 (TEE) participates in S-adenosyl-L-methionine binding.

Belongs to the class I-like SAM-binding methyltransferase superfamily. TrmB family.

It is found in the nucleus. The enzyme catalyses guanosine(46) in tRNA + S-adenosyl-L-methionine = N(7)-methylguanosine(46) in tRNA + S-adenosyl-L-homocysteine. It participates in tRNA modification; N(7)-methylguanine-tRNA biosynthesis. In terms of biological role, catalyzes the formation of N(7)-methylguanine at position 46 (m7G46) in tRNA. The sequence is that of tRNA (guanine-N(7)-)-methyltransferase from Bombyx mori (Silk moth).